We begin with the raw amino-acid sequence, 604 residues long: Beta-(1--&gt;2)glucan export ATP-binding/permease protein NdvA (604 aa).

Residues Gly21–Met311 enclose the ABC transmembrane type-1 domain. Helical transmembrane passes span Trp22–Phe42, Leu68–Leu88, Glu146–Trp166, Leu168–His188, Leu238–Ala258, and Ile285–Phe305. One can recognise an ABC transporter domain in the interval Val345 to Ala579. Gly378 to Ser385 is a binding site for ATP.

It belongs to the ABC transporter superfamily. Beta-(1--&gt;2)glucan exporter (TC 3.A.1.108.1) family. As to quaternary structure, homodimer.

The protein resides in the cell inner membrane. It catalyses the reaction [(1-&gt;2)-beta-D-glucosyl](n)(in) + ATP + H2O = [(1-&gt;2)-beta-D-glucosyl](n)(out) + ADP + phosphate + H(+). In terms of biological role, involved in beta-(1--&gt;2)glucan export. Transmembrane domains (TMD) form a pore in the inner membrane and the ATP-binding domain (NBD) is responsible for energy generation. This chain is Beta-(1--&gt;2)glucan export ATP-binding/permease protein NdvA, found in Rhodopseudomonas palustris (strain BisB18).